The following is a 450-amino-acid chain: Signal recognition particle protein (450 aa).

GTP contacts are provided by residues Gly106 to Thr113, Asp188 to Arg192, and Thr246 to Asp249.

Belongs to the GTP-binding SRP family. SRP54 subfamily. Part of the signal recognition particle protein translocation system, which is composed of SRP and FtsY.

It localises to the cytoplasm. The catalysed reaction is GTP + H2O = GDP + phosphate + H(+). Functionally, involved in targeting and insertion of nascent membrane proteins into the cytoplasmic membrane. Binds to the hydrophobic signal sequence of the ribosome-nascent chain (RNC) as it emerges from the ribosomes. The SRP-RNC complex is then targeted to the cytoplasmic membrane where it interacts with the SRP receptor FtsY. The sequence is that of Signal recognition particle protein from Mycoplasma pneumoniae (strain ATCC 29342 / M129 / Subtype 1) (Mycoplasmoides pneumoniae).